The sequence spans 287 residues: ATP synthase gamma chain (287 aa).

Belongs to the ATPase gamma chain family. In terms of assembly, F-type ATPases have 2 components, CF(1) - the catalytic core - and CF(0) - the membrane proton channel. CF(1) has five subunits: alpha(3), beta(3), gamma(1), delta(1), epsilon(1). CF(0) has three main subunits: a, b and c.

The protein localises to the cell inner membrane. Its function is as follows. Produces ATP from ADP in the presence of a proton gradient across the membrane. The gamma chain is believed to be important in regulating ATPase activity and the flow of protons through the CF(0) complex. The sequence is that of ATP synthase gamma chain from Tolumonas auensis (strain DSM 9187 / NBRC 110442 / TA 4).